We begin with the raw amino-acid sequence, 397 residues long: ATP-dependent RNA helicase eIF4A (397 aa).

The Q motif motif lies at Y23–Q51. A Helicase ATP-binding domain is found at I54–I224. ATP is bound at residue A67–T74. The DEAD box signature appears at D172–D175. The Helicase C-terminal domain occupies G235–F396.

It belongs to the DEAD box helicase family. eIF4A subfamily. In terms of assembly, component of the eIF4F complex, which composition varies with external and internal environmental conditions. It is composed of at least eIF4A, eIF4E and eIF4G.

The protein resides in the cytoplasm. The catalysed reaction is ATP + H2O = ADP + phosphate + H(+). Functionally, ATP-dependent RNA helicase which is a subunit of the eIF4F complex involved in cap recognition and is required for mRNA binding to ribosome. In the current model of translation initiation, eIF4A unwinds RNA secondary structures in the 5'-UTR of mRNAs which is necessary to allow efficient binding of the small ribosomal subunit, and subsequent scanning for the initiator codon. This Debaryomyces hansenii (strain ATCC 36239 / CBS 767 / BCRC 21394 / JCM 1990 / NBRC 0083 / IGC 2968) (Yeast) protein is ATP-dependent RNA helicase eIF4A (TIF1).